Reading from the N-terminus, the 87-residue chain is Small ribosomal subunit protein uS12m (87 aa).

It belongs to the universal ribosomal protein uS12 family.

Its subcellular location is the mitochondrion matrix. It localises to the kinetoplast. In terms of biological role, protein S12 is involved in the translation initiation step. The sequence is that of Small ribosomal subunit protein uS12m (RPS12) from Trypanoplasma borreli.